The primary structure comprises 391 residues: 23S rRNA (uracil(747)-C(5))-methyltransferase RlmC (391 aa).

Cys-5, Cys-13, Cys-16, and Cys-95 together coordinate [4Fe-4S] cluster. 4 residues coordinate S-adenosyl-L-methionine: Gln-220, Phe-249, Glu-276, and Asn-322. Residue Cys-349 is the Nucleophile of the active site.

The protein belongs to the class I-like SAM-binding methyltransferase superfamily. RNA M5U methyltransferase family. RlmC subfamily.

It catalyses the reaction uridine(747) in 23S rRNA + S-adenosyl-L-methionine = 5-methyluridine(747) in 23S rRNA + S-adenosyl-L-homocysteine + H(+). In terms of biological role, catalyzes the formation of 5-methyl-uridine at position 747 (m5U747) in 23S rRNA. In Actinobacillus pleuropneumoniae serotype 3 (strain JL03), this protein is 23S rRNA (uracil(747)-C(5))-methyltransferase RlmC.